A 63-amino-acid polypeptide reads, in one-letter code: Large ribosomal subunit protein bL28 (63 aa).

This sequence belongs to the bacterial ribosomal protein bL28 family.

The sequence is that of Large ribosomal subunit protein bL28 (rpmB) from Selenomonas ruminantium.